The sequence spans 423 residues: Serine--tRNA ligase (423 aa).

Residue 230–232 (TAE) participates in L-serine binding. Residue 261–263 (RSE) coordinates ATP. E284 serves as a coordination point for L-serine. 348-351 (EISS) contacts ATP. S384 provides a ligand contact to L-serine.

This sequence belongs to the class-II aminoacyl-tRNA synthetase family. Type-1 seryl-tRNA synthetase subfamily. Homodimer. The tRNA molecule binds across the dimer.

Its subcellular location is the cytoplasm. The enzyme catalyses tRNA(Ser) + L-serine + ATP = L-seryl-tRNA(Ser) + AMP + diphosphate + H(+). The catalysed reaction is tRNA(Sec) + L-serine + ATP = L-seryl-tRNA(Sec) + AMP + diphosphate + H(+). Its pathway is aminoacyl-tRNA biosynthesis; selenocysteinyl-tRNA(Sec) biosynthesis; L-seryl-tRNA(Sec) from L-serine and tRNA(Sec): step 1/1. Functionally, catalyzes the attachment of serine to tRNA(Ser). Is also able to aminoacylate tRNA(Sec) with serine, to form the misacylated tRNA L-seryl-tRNA(Sec), which will be further converted into selenocysteinyl-tRNA(Sec). This Syntrophobacter fumaroxidans (strain DSM 10017 / MPOB) protein is Serine--tRNA ligase.